The following is a 445-amino-acid chain: Ubiquitin carboxyl-terminal hydrolase 11 (445 aa).

One can recognise a USP domain in the interval 1–412 (NSARADLCVA…AAYVLFYQRQ (412 aa)). Positions 127 to 194 (RPSSDDEDDG…GPSHWPQRAR (68 aa)) are disordered. S130 bears the Phosphoserine mark. Acidic residues predominate over residues 131-140 (DDEDDGDEKD). The active-site Nucleophile is the H362. H370 (proton acceptor) is an active-site residue. The segment at 416-445 (RRLQPQPSSSDPPASPACGSPPNSEFMDVN) is disordered. A compositionally biased stretch (low complexity) spans 420–439 (PQPSSSDPPASPACGSPPNS). At S430 the chain carries Phosphoserine.

This sequence belongs to the peptidase C19 family. In terms of assembly, monomer. Interacts with RANBP9/RANBPM. Interacts with BRCA2. Interacts with CHUK/IKKA. Interacts with NFKBIA. Associated component of the Polycomb group (PcG) multiprotein PRC1-like complex.

The protein resides in the nucleus. The protein localises to the cytoplasm. It localises to the chromosome. It catalyses the reaction Thiol-dependent hydrolysis of ester, thioester, amide, peptide and isopeptide bonds formed by the C-terminal Gly of ubiquitin (a 76-residue protein attached to proteins as an intracellular targeting signal).. In terms of biological role, protease that can remove conjugated ubiquitin from target proteins and polyubiquitin chains. Inhibits the degradation of target proteins by the proteasome. Cleaves preferentially 'Lys-6' and 'Lys-63'-linked ubiquitin chains. Has lower activity with 'Lys-11' and 'Lys-33'-linked ubiquitin chains, and extremely low activity with 'Lys-27', 'Lys-29' and 'Lys-48'-linked ubiquitin chains (in vitro). Plays a role in the regulation of pathways leading to NF-kappa-B activation. Plays a role in the regulation of DNA repair after double-stranded DNA breaks. Acts as a chromatin regulator via its association with the Polycomb group (PcG) multiprotein PRC1-like complex; may act by deubiquitinating components of the PRC1-like complex. Promotes cell proliferation by deubiquitinating phosphorylated E2F1. The sequence is that of Ubiquitin carboxyl-terminal hydrolase 11 (USP11) from Canis lupus familiaris (Dog).